The chain runs to 475 residues: Ribulose bisphosphate carboxylase large chain (475 aa).

The propeptide occupies 1–2 (MS). The residue at position 3 (P3) is an N-acetylproline. K14 bears the N6,N6,N6-trimethyllysine mark. 2 residues coordinate substrate: N123 and T173. K175 functions as the Proton acceptor in the catalytic mechanism. K177 is a substrate binding site. The Mg(2+) site is built by K201, D203, and E204. An N6-carboxylysine modification is found at K201. Residue H294 is the Proton acceptor of the active site. 3 residues coordinate substrate: R295, H327, and S379.

It belongs to the RuBisCO large chain family. Type I subfamily. As to quaternary structure, heterohexadecamer of 8 large chains and 8 small chains; disulfide-linked. The disulfide link is formed within the large subunit homodimers. Mg(2+) is required as a cofactor. Post-translationally, the disulfide bond which can form in the large chain dimeric partners within the hexadecamer appears to be associated with oxidative stress and protein turnover.

It is found in the plastid. The protein localises to the chloroplast. It carries out the reaction 2 (2R)-3-phosphoglycerate + 2 H(+) = D-ribulose 1,5-bisphosphate + CO2 + H2O. The catalysed reaction is D-ribulose 1,5-bisphosphate + O2 = 2-phosphoglycolate + (2R)-3-phosphoglycerate + 2 H(+). RuBisCO catalyzes two reactions: the carboxylation of D-ribulose 1,5-bisphosphate, the primary event in carbon dioxide fixation, as well as the oxidative fragmentation of the pentose substrate in the photorespiration process. Both reactions occur simultaneously and in competition at the same active site. This chain is Ribulose bisphosphate carboxylase large chain, found in Cycas taitungensis (Prince sago).